The following is a 258-amino-acid chain: UPF0246 protein IL2146 (258 aa).

Belongs to the UPF0246 family.

In Idiomarina loihiensis (strain ATCC BAA-735 / DSM 15497 / L2-TR), this protein is UPF0246 protein IL2146.